The primary structure comprises 156 residues: Persephin (156 aa).

Positions 1-21 (MAAGRLRILCLLLLSLHPSLG) are cleaved as a signal peptide. Intrachain disulfides connect C66/C124, C93/C152, and C97/C154.

The protein belongs to the TGF-beta family. GDNF subfamily. As to quaternary structure, homodimer; disulfide-linked. Interacts with GFRA4 coreceptor and RET: forms a 2:2:2 ternary complex composed of PSPN ligand, GFRA4 and RET receptor.

Its subcellular location is the secreted. Growth factor that exhibits neurotrophic activity on mesencephalic dopaminergic and motor neurons. Acts by binding to its coreceptor, GFRA4, leading to autophosphorylation and activation of the RET receptor. In Mus musculus (Mouse), this protein is Persephin.